The chain runs to 549 residues: Manganese transporter SMF2 (549 aa).

The disordered stretch occupies residues 1–23 (MTSQEYEPIQWSDESQTNNDSVN). Polar residues predominate over residues 12-22 (SDESQTNNDSV). Helical transmembrane passes span 91–109 (LLFS…QYLC), 130–147 (FGLN…IIAT), 161–185 (ILFH…LLAY), 196–214 (IFEA…CFTV), 312–332 (LLIS…IVSG), 350–372 (IYNL…ALLF), 432–452 (ASQV…LYFT), and 521–541 (VLAI…LLGF).

It belongs to the NRAMP family.

It localises to the vacuole lumen. It is found in the vesicle. Its subcellular location is the cell membrane. It catalyses the reaction Mn(2+)(in) = Mn(2+)(out). Its function is as follows. High-affinity manganese transporter involved in manganese uptake from the extracellular environment. This Saccharomyces cerevisiae (strain ATCC 204508 / S288c) (Baker's yeast) protein is Manganese transporter SMF2 (SMF2).